Reading from the N-terminus, the 379-residue chain is LIM/homeobox protein Lhx9 (379 aa).

2 consecutive LIM zinc-binding domains span residues 51–112 (TLCA…RFSV) and 113–175 (QRCA…LVQG). 2 disordered regions span residues 232–257 (ENDT…TSFK) and 310–379 (RQEN…TNLF). The span at 248-257 (KTKRMRTSFK) shows a compositional bias: basic residues. The segment at residues 249–308 (TKRMRTSFKHHQLRTTKSYFAINHNPDAKDLKQLAQKTGLTKRVLQVWFQNARAKFRRNL) is a DNA-binding region (homeobox). Polar residues predominate over residues 326 to 379 (APASTDSAALTPTGAASTLSDLTSPSLNVGASVTPNMDSHESGSPSQTTLTNLF).

Isoform 1 and isoform 3 are expressed in ovary, testis, brain and heart. Isoform 4 and isoform 5 are expressed in brain.

It is found in the nucleus. Functionally, may be involved in gonadal development. The protein is LIM/homeobox protein Lhx9 (lhx9) of Glandirana rugosa (Japanese wrinkled frog).